A 151-amino-acid polypeptide reads, in one-letter code: 6,7-dimethyl-8-ribityllumazine synthase (151 aa).

Residues phenylalanine 15, 49–51, and 73–75 each bind 5-amino-6-(D-ribitylamino)uracil; these read AVE and AVI. 78–79 contacts (2S)-2-hydroxy-3-oxobutyl phosphate; that stretch reads ET. Histidine 81 acts as the Proton donor in catalysis. Phenylalanine 106 serves as a coordination point for 5-amino-6-(D-ribitylamino)uracil. (2S)-2-hydroxy-3-oxobutyl phosphate is bound at residue arginine 120.

This sequence belongs to the DMRL synthase family. As to quaternary structure, forms an icosahedral capsid composed of 60 subunits, arranged as a dodecamer of pentamers.

The catalysed reaction is (2S)-2-hydroxy-3-oxobutyl phosphate + 5-amino-6-(D-ribitylamino)uracil = 6,7-dimethyl-8-(1-D-ribityl)lumazine + phosphate + 2 H2O + H(+). Its pathway is cofactor biosynthesis; riboflavin biosynthesis; riboflavin from 2-hydroxy-3-oxobutyl phosphate and 5-amino-6-(D-ribitylamino)uracil: step 1/2. In terms of biological role, catalyzes the formation of 6,7-dimethyl-8-ribityllumazine by condensation of 5-amino-6-(D-ribitylamino)uracil with 3,4-dihydroxy-2-butanone 4-phosphate. This is the penultimate step in the biosynthesis of riboflavin. This Coxiella burnetii (strain CbuG_Q212) (Coxiella burnetii (strain Q212)) protein is 6,7-dimethyl-8-ribityllumazine synthase.